A 309-amino-acid chain; its full sequence is Wall-associated proteinase (309 aa).

N-linked (GlcNAc...) asparagine glycans are attached at residues Asn190 and Asn295.

The protein localises to the secreted. It localises to the cell wall. It is found in the membrane. Its function is as follows. May participate in wall plasticization and/or intussusception or in cell wall turnover. The sequence is that of Wall-associated proteinase from Coccidioides posadasii (strain RMSCC 757 / Silveira) (Valley fever fungus).